The chain runs to 233 residues: C-type lectin domain family 2 member D5 (233 aa).

The interval 1-52 (MPSSAHLQDPPPLLSRTLTQNEGQTSLRQSSSCGPSAASASESLSGSTESRI) is disordered. Residues 1-76 (MPSSAHLQDP…PLEYPAGLYC (76 aa)) are Cytoplasmic-facing. Residues 16-29 (RTLTQNEGQTSLRQ) show a composition bias toward polar residues. Positions 30–50 (SSSCGPSAASASESLSGSTES) are enriched in low complexity. A helical; Signal-anchor for type II membrane protein membrane pass occupies residues 77–97 (CYVVIIVLSVAVVALSVALSV). The Extracellular portion of the chain corresponds to 98–233 (KKTAQISTIN…KPNSYTSQCL (136 aa)). The C-type lectin domain occupies 119–228 (VGNKCFYFNE…KSICRKPNSY (110 aa)). The N-linked (GlcNAc...) asparagine glycan is linked to Asn-132.

The protein resides in the cell membrane. In terms of biological role, lectin-type cell surface receptor. This is C-type lectin domain family 2 member D5 (Ocil) from Rattus norvegicus (Rat).